We begin with the raw amino-acid sequence, 261 residues long: Gap junction beta-6 protein (261 aa).

The Cytoplasmic portion of the chain corresponds to 1 to 22 (MDWGTLHTFVGGVNKHSTSIGK). The chain crosses the membrane as a helical span at residues 23-45 (VWVTVLFVFRVMILVVAAQEVWG). Residues 46-75 (DEQEDFVCNTLQPGCRNVCYDHFFPVSHIR) lie on the Extracellular side of the membrane. The helical transmembrane segment at 76 to 98 (LWALQLIFVSTPALLVAMHVAYY) threads the bilayer. Residues 99–131 (RHEAARRFRRGETRSEFKDLEDIKRQKVRIEGS) lie on the Cytoplasmic side of the membrane. Residues 132–154 (LWWTYTSSIFFRIVFEAAFMYVF) traverse the membrane as a helical segment. Residues 155–192 (YFLYNGYHLPWVLKCGIQPCPNLVDCFISRPTEKTVFT) lie on the Extracellular side of the membrane. A helical membrane pass occupies residues 193 to 215 (IFMISASVICMLLNVAELCYLLL). At 216–261 (KVCFRRSKRAQTQKAPPNHALKESKQNEMNELISEGGQNAITGFPS) the chain is on the cytoplasmic side.

The protein belongs to the connexin family. Beta-type (group I) subfamily. A connexon is composed of a hexamer of connexins. Interacts with CNST.

The protein resides in the cell membrane. The protein localises to the cell junction. It localises to the gap junction. In terms of biological role, one gap junction consists of a cluster of closely packed pairs of transmembrane channels, the connexons, through which materials of low MW diffuse from one cell to a neighboring cell. The polypeptide is Gap junction beta-6 protein (GJB6) (Bos taurus (Bovine)).